The following is a 425-amino-acid chain: Protein PTI1 (425 aa).

Ser-272 is modified (phosphoserine).

As to quaternary structure, component of the cleavage and polyadenylation factor (CPF) complex, which is composed of PTI1, SYC1, SSU72, GLC7, MPE1, REF2, PFS2, PTA1, YSH1/BRR5, SWD2, CFT2/YDH1, YTH1, CFT1/YHH1, FIP1 and PAP1. Component of the APT complex, which is a subcomplex of CPF, and is composed of PTI1, SYC1, SSU72, GLC7, REF2, PTA1 and SWD2.

It is found in the nucleus. Its function is as follows. Component of the cleavage and polyadenylation factor (CPF) complex, which plays a key role in polyadenylation-dependent pre-mRNA 3'-end formation and cooperates with cleavage factors including the CFIA complex and NAB4/CFIB. Component of the APT complex, which may be involved in polyadenylation-independent transcript 3'-end formation. PTI1 is required for 3'-end formation of snoRNAs. In Saccharomyces cerevisiae (strain ATCC 204508 / S288c) (Baker's yeast), this protein is Protein PTI1 (PTI1).